The following is a 225-amino-acid chain: UPF0758 protein Spea_3837 (225 aa).

An MPN domain is found at Ile-102 to Ile-224. Residues His-173, His-175, and Asp-186 each contribute to the Zn(2+) site. The JAMM motif signature appears at His-173 to Asp-186.

It belongs to the UPF0758 family.

This is UPF0758 protein Spea_3837 from Shewanella pealeana (strain ATCC 700345 / ANG-SQ1).